The chain runs to 239 residues: Carboxy-S-adenosyl-L-methionine synthase (239 aa).

S-adenosyl-L-methionine-binding positions include Tyr-35, 64–66 (GCS), 88–89 (DN), and Arg-195.

The protein belongs to the class I-like SAM-binding methyltransferase superfamily. Cx-SAM synthase family. As to quaternary structure, homodimer.

The enzyme catalyses prephenate + S-adenosyl-L-methionine = carboxy-S-adenosyl-L-methionine + 3-phenylpyruvate + H2O. Functionally, catalyzes the conversion of S-adenosyl-L-methionine (SAM) to carboxy-S-adenosyl-L-methionine (Cx-SAM). The protein is Carboxy-S-adenosyl-L-methionine synthase of Helicobacter pylori (strain HPAG1).